Here is a 284-residue protein sequence, read N- to C-terminus: Nucleotide-binding protein SPO0713 (284 aa).

3 to 10 (GPSGAGRS) serves as a coordination point for ATP. Position 50-53 (50-53 (DARN)) interacts with GTP.

This sequence belongs to the RapZ-like family.

Its function is as follows. Displays ATPase and GTPase activities. The protein is Nucleotide-binding protein SPO0713 of Ruegeria pomeroyi (strain ATCC 700808 / DSM 15171 / DSS-3) (Silicibacter pomeroyi).